We begin with the raw amino-acid sequence, 416 residues long: Formyl-CoA:oxalate CoA-transferase (416 aa).

CoA is bound by residues 17-18 (QS), arginine 38, 72-75 (LNTK), 96-98 (NFH), histidine 104, and 137-140 (KAYE). Residue aspartate 169 is the Nucleophile of the active site. 248–250 (GGQ) is a binding site for substrate. 273–275 (QEQ) contacts CoA.

The protein belongs to the CoA-transferase III family. Frc subfamily. In terms of assembly, homodimer.

The catalysed reaction is formyl-CoA + oxalate = oxalyl-CoA + formate. The protein operates within metabolic intermediate degradation; oxalate degradation; CO(2) and formate from oxalate: step 1/2. Functionally, involved in the catabolism of oxalate and in the adapatation to low pH via the induction of the oxalate-dependent acid tolerance response (ATR). Catalyzes the transfer of the CoA moiety from formyl-CoA to oxalate. The polypeptide is Formyl-CoA:oxalate CoA-transferase (Shigella boydii serotype 18 (strain CDC 3083-94 / BS512)).